The chain runs to 115 residues: MSAALLLATLLMTGLGQVAQKLTVEHWRLVAADGWTARLRSPWPWLALLALGLGLLCWLLLLQRVEVGSAYPMLALNFVLVTLAARFVFDEPVDRRHLAGLLLIVAGVVLLGRSA.

Transmembrane regions (helical) follow at residues 42-62, 65-85, and 93-112; these read PWPW…LLLL, VEVG…TLAA, and VDRR…VLLG. Residues 46–113 enclose the EamA domain; sequence LALLALGLGL…IVAGVVLLGR (68 aa).

The protein belongs to the ArnE family. Heterodimer of ArnE and ArnF.

The protein localises to the cell inner membrane. It functions in the pathway bacterial outer membrane biogenesis; lipopolysaccharide biosynthesis. Translocates 4-amino-4-deoxy-L-arabinose-phosphoundecaprenol (alpha-L-Ara4N-phosphoundecaprenol) from the cytoplasmic to the periplasmic side of the inner membrane. This chain is Probable 4-amino-4-deoxy-L-arabinose-phosphoundecaprenol flippase subunit ArnE, found in Pseudomonas aeruginosa (strain UCBPP-PA14).